The following is a 261-amino-acid chain: Small ribosomal subunit protein eS1 (261 aa).

The segment covering 1 to 18 has biased composition (basic residues); sequence MAVGKNKRISKGKKGGKK. The disordered stretch occupies residues 1–23; sequence MAVGKNKRISKGKKGGKKKAADP.

The protein belongs to the eukaryotic ribosomal protein eS1 family. Component of the small ribosomal subunit. Mature ribosomes consist of a small (40S) and a large (60S) subunit. The 40S subunit contains about 33 different proteins and 1 molecule of RNA (18S). The 60S subunit contains about 49 different proteins and 3 molecules of RNA (25S, 5.8S and 5S).

Its subcellular location is the cytoplasm. The chain is Small ribosomal subunit protein eS1 (cyc07) from Nicotiana tabacum (Common tobacco).